The primary structure comprises 173 residues: ATP-dependent protease subunit HslV (173 aa).

Thr2 is an active-site residue. 3 residues coordinate Na(+): Gly158, Asp161, and Ser164.

Belongs to the peptidase T1B family. HslV subfamily. In terms of assembly, a double ring-shaped homohexamer of HslV is capped on each side by a ring-shaped HslU homohexamer. The assembly of the HslU/HslV complex is dependent on binding of ATP.

It localises to the cytoplasm. The enzyme catalyses ATP-dependent cleavage of peptide bonds with broad specificity.. Its activity is regulated as follows. Allosterically activated by HslU binding. Its function is as follows. Protease subunit of a proteasome-like degradation complex believed to be a general protein degrading machinery. This is ATP-dependent protease subunit HslV from Actinobacillus pleuropneumoniae serotype 5b (strain L20).